Here is a 141-residue protein sequence, read N- to C-terminus: Large ribosomal subunit protein uL16 (141 aa).

The segment covering 1–16 has biased composition (basic residues); the sequence is MLMPRKPPKGFRKPHH. Residues 1-27 form a disordered region; the sequence is MLMPRKPPKGFRKPHHPDRSGASKGGN.

This sequence belongs to the universal ribosomal protein uL16 family. As to quaternary structure, part of the 50S ribosomal subunit.

Functionally, binds 23S rRNA and is also seen to make contacts with the A and possibly P site tRNAs. The sequence is that of Large ribosomal subunit protein uL16 from Salinispora arenicola (strain CNS-205).